A 154-amino-acid chain; its full sequence is D-aminoacyl-tRNA deacylase (154 aa).

A Gly-cisPro motif, important for rejection of L-amino acids motif is present at residues 138-139 (GP).

Belongs to the DTD family. As to quaternary structure, homodimer.

The protein resides in the cytoplasm. It carries out the reaction glycyl-tRNA(Ala) + H2O = tRNA(Ala) + glycine + H(+). The enzyme catalyses a D-aminoacyl-tRNA + H2O = a tRNA + a D-alpha-amino acid + H(+). In terms of biological role, an aminoacyl-tRNA editing enzyme that deacylates mischarged D-aminoacyl-tRNAs. Also deacylates mischarged glycyl-tRNA(Ala), protecting cells against glycine mischarging by AlaRS. Acts via tRNA-based rather than protein-based catalysis; rejects L-amino acids rather than detecting D-amino acids in the active site. By recycling D-aminoacyl-tRNA to D-amino acids and free tRNA molecules, this enzyme counteracts the toxicity associated with the formation of D-aminoacyl-tRNA entities in vivo and helps enforce protein L-homochirality. This chain is D-aminoacyl-tRNA deacylase, found in Halorhodospira halophila (strain DSM 244 / SL1) (Ectothiorhodospira halophila (strain DSM 244 / SL1)).